The primary structure comprises 101 residues: Urease subunit beta (101 aa).

It belongs to the urease beta subunit family. As to quaternary structure, heterotrimer of UreA (gamma), UreB (beta) and UreC (alpha) subunits. Three heterotrimers associate to form the active enzyme.

The protein localises to the cytoplasm. The catalysed reaction is urea + 2 H2O + H(+) = hydrogencarbonate + 2 NH4(+). Its pathway is nitrogen metabolism; urea degradation; CO(2) and NH(3) from urea (urease route): step 1/1. The sequence is that of Urease subunit beta from Cupriavidus necator (strain ATCC 17699 / DSM 428 / KCTC 22496 / NCIMB 10442 / H16 / Stanier 337) (Ralstonia eutropha).